The chain runs to 435 residues: MASAQTGTEMSPHHVTRTYKHENFLSFISTMSEKETVETTQEPKQVVEPTQELEELAIDGDQAAAKKKKSKKKKKKAVSLDKTYADGVFPEGQWMEYPLEVNSYRTTDEEKRYLDRQQNNHWQDFRKGAEVHRRVRQKAQQQIKPGMTMLEIADLIENSIRTYTGNDHTLKQGIGFPTGLSLNHVAAHYTPNSNDKVVLKYEDVMKVDIGVHVNGHIVDSAFTLTFDDKYDNLLTAVREATYTGVKEAGIDVRLNDIGAAVQEVMESYEVELDGKTYPVKCIRNLNGHNIGDYVIHSGKTVPIVANGDMTKMEEGETFAIETFGTTGKGYVIPQGECSHYALNQDIDGVKLPSERAKSLVKSIKDNFGTLPWCRRYLERAGEDKYLLALNQLVRAGVVEDYPPLVDTSGSYTAQYEHTILLHPHKKEVVSKGDDY.

The segment at 57–77 (AIDGDQAAAKKKKSKKKKKKA) is disordered. Residues 65-77 (AKKKKSKKKKKKA) show a composition bias toward basic residues. His-188 contributes to the substrate binding site. 3 residues coordinate a divalent metal cation: Asp-208, Asp-219, and His-288. His-296 is a binding site for substrate. 2 residues coordinate a divalent metal cation: Glu-321 and Glu-416.

It belongs to the peptidase M24A family. Methionine aminopeptidase eukaryotic type 2 subfamily. Requires Co(2+) as cofactor. It depends on Zn(2+) as a cofactor. Mn(2+) is required as a cofactor. Fe(2+) serves as cofactor.

The protein localises to the cytoplasm. It carries out the reaction Release of N-terminal amino acids, preferentially methionine, from peptides and arylamides.. Its function is as follows. Cotranslationally removes the N-terminal methionine from nascent proteins. The N-terminal methionine is often cleaved when the second residue in the primary sequence is small and uncharged (Met-Ala-, Cys, Gly, Pro, Ser, Thr, or Val). The protein is Methionine aminopeptidase 2 of Clavispora lusitaniae (strain ATCC 42720) (Yeast).